A 349-amino-acid chain; its full sequence is Nicotinate-nucleotide--dimethylbenzimidazole phosphoribosyltransferase (349 aa).

A disordered region spans residues 1–20 (MEFATVSPPDPGTAAAARAR). E313 functions as the Proton acceptor in the catalytic mechanism.

It belongs to the CobT family.

It catalyses the reaction 5,6-dimethylbenzimidazole + nicotinate beta-D-ribonucleotide = alpha-ribazole 5'-phosphate + nicotinate + H(+). It participates in nucleoside biosynthesis; alpha-ribazole biosynthesis; alpha-ribazole from 5,6-dimethylbenzimidazole: step 1/2. Catalyzes the synthesis of alpha-ribazole-5'-phosphate from nicotinate mononucleotide (NAMN) and 5,6-dimethylbenzimidazole (DMB). This is Nicotinate-nucleotide--dimethylbenzimidazole phosphoribosyltransferase from Mycolicibacterium paratuberculosis (strain ATCC BAA-968 / K-10) (Mycobacterium paratuberculosis).